Consider the following 515-residue polypeptide: Gap junction alpha-9 protein (515 aa).

The Cytoplasmic portion of the chain corresponds to 1 to 19 (MGDWNLLGDTLEEVHIHST). The helical transmembrane segment at 20–40 (MIGKIWLTILFIFRMLVLGVA) threads the bilayer. At 41-77 (AEDVWNDEQSGFICNTEQPGCRNVCYDQAFPISLIRY) the chain is on the extracellular side. The chain crosses the membrane as a helical span at residues 78–98 (WVLQVIFVSSPSLVYMGHALY). The Cytoplasmic portion of the chain corresponds to 99 to 166 (RLRVLEEERQ…YVIHIFTRSV (68 aa)). Residues 167-187 (VEVGFMIGQYLLYGFHLEPLF) traverse the membrane as a helical segment. The Extracellular segment spans residues 188–209 (KCHGHPCPNIIDCFVSRPTEKT). A helical membrane pass occupies residues 210 to 230 (IFLLFMQSIATISLFLNILEI). The Cytoplasmic segment spans residues 231 to 515 (FHLGFKKIKR…GRRVPTDLQI (285 aa)). Residues 370-380 (KRETEGKDSKR) show a composition bias toward basic and acidic residues. Disordered regions lie at residues 370–400 (KRETEGKDSKRNYYSRGHRSIPGVAIDGENN) and 428–472 (SSTE…NTAD). Positions 456–472 (PPSQGDSQSLDIPNTAD) are enriched in polar residues.

It belongs to the connexin family. Alpha-type (group II) subfamily. In terms of assembly, a connexon is composed of a hexamer of connexins. Highly abundant in skeletal muscle. Also detected in testis.

The protein localises to the cell membrane. It localises to the cell junction. It is found in the gap junction. Functionally, one gap junction consists of a cluster of closely packed pairs of transmembrane channels, the connexons, through which materials of low MW diffuse from one cell to a neighboring cell. The chain is Gap junction alpha-9 protein (GJA9) from Homo sapiens (Human).